The chain runs to 256 residues: Peptidyl-prolyl cis-trans isomerase FKBP19, chloroplastic (256 aa).

A chloroplast-targeting transit peptide spans 1–29 (MASISSFGCFPQSTALAGTSSTTRCRTTV). The transit peptide at 30 to 88 (AARLADQSDDFAPLRSSGGNCGCVNNSGEFDRRKLLVSSVGLLIGALSYDSKDGDFASA) directs the protein to the thylakoid. In terms of domain architecture, PPIase FKBP-type spans 135-254 (GDKVVVDWDG…LFDVELLKIV (120 aa)). Serine 164 is subject to Phosphoserine.

It belongs to the FKBP-type PPIase family.

The protein resides in the plastid. It localises to the chloroplast thylakoid lumen. It carries out the reaction [protein]-peptidylproline (omega=180) = [protein]-peptidylproline (omega=0). In terms of biological role, PPIases accelerate the folding of proteins. It catalyzes the cis-trans isomerization of proline imidic peptide bonds in oligopeptides. The sequence is that of Peptidyl-prolyl cis-trans isomerase FKBP19, chloroplastic (FKBP19) from Arabidopsis thaliana (Mouse-ear cress).